Reading from the N-terminus, the 135-residue chain is Large ribosomal subunit protein uL15 (135 aa).

The interval 21-66 (VGRGQGSGMGKTATRGGKGQTARTGYKAKRGFEGGQQPLQRRLPKI) is disordered.

Belongs to the universal ribosomal protein uL15 family. As to quaternary structure, part of the 50S ribosomal subunit.

Its function is as follows. Binds to the 23S rRNA. The protein is Large ribosomal subunit protein uL15 of Helicobacter pylori (strain HPAG1).